The chain runs to 2138 residues: Protein virilizer homolog (2138 aa).

Disordered regions lie at residues 1503–1574 (RLPQ…SMHV), 1638–1664 (NPTPARDTEKVAGKPKQFKADPDDDLQ), 1855–1881 (PVIPHSSDSLSNQSSPFISHGTQSSGG), 2013–2035 (PMQPPQHVRPPIQISQPSEQGVS), and 2058–2094 (YYHPPQQQEISQVQQQQQHHAVQGQQGAGTSQQQESG). The segment covering 1528 to 1541 (ENSSVDIPTQNSIQ) has biased composition (polar residues). Composition is skewed to polar residues over residues 1862–1881 (DSLSNQSSPFISHGTQSSGG) and 2025–2035 (QISQPSEQGVS).

The protein belongs to the vir family. Interacts with MTB, FIP37 and HAKAI. Associates with MTA, MTB, FIP37 and HAKAI to form the m6A writer complex which is essential for adenosine methylation at specific mRNA sequences.

It is found in the nucleus speckle. It localises to the nucleus. The protein localises to the nucleoplasm. Its function is as follows. Subunit of the N6-methyltransferase complex, a multiprotein complex that mediates N6-methyladenosine (m6A) methylation at the 5'-[AG]GAC-3' consensus sites of some mRNAs. Associates with MTA, MTB, FIP37 and HAKAI to form the m6A writer complex which is essential for adenosine methylation at specific mRNA sequences. N6-methyladenosine (m6A) plays a role in mRNA stability, processing, translation efficiency and editing. This is Protein virilizer homolog from Arabidopsis thaliana (Mouse-ear cress).